The sequence spans 1181 residues: Sodium/potassium/calcium exchanger 1 (1181 aa).

The Extracellular portion of the chain corresponds to M1–Q419. 3 disordered regions span residues A107 to K232, S255 to P276, and S300 to T323. Polar residues predominate over residues S124 to T136. N271 carries an N-linked (GlcNAc...) asparagine glycan. The span at T301–A311 shows a compositional bias: polar residues. A helical transmembrane segment spans residues G420–C440. At D441 to A464 the chain is on the cytoplasmic side. Residues V461–F501 form an Alpha-1 repeat. Residues T465–I485 form a helical membrane-spanning segment. At S486 to G491 the chain is on the extracellular side. A helical membrane pass occupies residues I492 to L512. At F513–N519 the chain is on the cytoplasmic side. A helical membrane pass occupies residues L520 to L544. The Extracellular segment spans residues D545–E552. Residues S553 to W569 traverse the membrane as a helical segment. The Cytoplasmic portion of the chain corresponds to N570 to K989. The interval P598–P617 is disordered. S625 carries the post-translational modification Phosphoserine. The interval G650–W983 is disordered. Position 690 is a phosphothreonine (T690). Residues G701–E715 show a composition bias toward acidic residues. 14 repeat units span residues E730–G741, E742–E754, E755–G766, E767–G778, E779–G791, E792–G804, E805–G817, E818–G830, E831–V843, E844–G856, E857–G869, E870–G881, E882–G893, and E894–G905. Basic and acidic residues-rich tracts occupy residues E730–D750, E757–E775, and A782–E805. Positions E730–G905 are 14 X approximate tandem repeats. Positions T806 to E820 are enriched in acidic residues. Residues A834–Q906 are compositionally biased toward basic and acidic residues. 2 stretches are compositionally biased toward acidic residues: residues G921–C931 and G949–L979. The helical transmembrane segment at Q990–V1010 threads the bilayer. Over R1011–K1017 the chain is Extracellular. The chain crosses the membrane as a helical span at residues F1018–V1038. Residues W1039 to E1053 lie on the Cytoplasmic side of the membrane. The helical transmembrane segment at I1054–I1074 threads the bilayer. One copy of the Alpha-2 repeat lies at A1061–N1092. Over V1075–N1092 the chain is Extracellular. A helical membrane pass occupies residues I1093–L1113. Over Q1114–N1121 the chain is Cytoplasmic. The chain crosses the membrane as a helical span at residues G1122–A1142. Topologically, residues S1143–K1150 are extracellular. The chain crosses the membrane as a helical span at residues I1151–E1171. Topologically, residues D1172 to V1181 are cytoplasmic.

The protein belongs to the Ca(2+):cation antiporter (CaCA) (TC 2.A.19) family. SLC24A subfamily. The uncleaved signal sequence is required for efficient membrane targeting and proper membrane integration and topology. As to expression, highly expressed in the eye.

It is found in the cell membrane. The catalysed reaction is Ca(2+)(out) + K(+)(out) + 4 Na(+)(in) = Ca(2+)(in) + K(+)(in) + 4 Na(+)(out). Its function is as follows. Calcium, potassium:sodium antiporter that transports 1 Ca(2+) and 1 K(+) in exchange for 4 Na(+). Critical component of the visual transduction cascade, controlling the calcium concentration of outer segments during light and darkness. Light causes a rapid lowering of cytosolic free calcium in the outer segment of both retinal rod and cone photoreceptors and the light-induced lowering of calcium is caused by extrusion via this protein which plays a key role in the process of light adaptation. The sequence is that of Sodium/potassium/calcium exchanger 1 (Slc24a1) from Rattus norvegicus (Rat).